The sequence spans 237 residues: UPF0053 inner membrane protein YgdQ (237 aa).

At 1–17 (MLFAWITDPNAWLALGT) the chain is on the periplasmic side. Residues 18–38 (LTLLEIVLGIDNIIFLSLVVA) form a helical membrane-spanning segment. Residues 39–50 (KLPTAQRAHARR) lie on the Cytoplasmic side of the membrane. The helical transmembrane segment at 51–71 (LGLAGAMVMRLALLASIAWVT) threads the bilayer. The Periplasmic segment spans residues 72-79 (RLTNPLFT). A helical transmembrane segment spans residues 80–100 (IFSQEISARDLILLLGGLFLI). Topologically, residues 101–124 (WKASKEIHESIEGEEEGLKTRVSS) are cytoplasmic. Residues 125-145 (FLGAIVQIMLLDIIFSLDSVI) traverse the membrane as a helical segment. The Periplasmic segment spans residues 146-151 (TAVGLS). The chain crosses the membrane as a helical span at residues 152–172 (DHLFIMMAAVVIAVGVMMFAA). The Cytoplasmic portion of the chain corresponds to 173 to 186 (RSIGDFVERHPSVK). The chain crosses the membrane as a helical span at residues 187 to 207 (MLALSFLILVGFTLILESFDI). The Periplasmic portion of the chain corresponds to 208 to 209 (HV). A helical transmembrane segment spans residues 210–230 (PKGYIYFAMFFSIAVESLNLI). The Cytoplasmic portion of the chain corresponds to 231–237 (RNKKNPL).

Belongs to the UPF0053 family.

The protein localises to the cell inner membrane. This Escherichia coli O157:H7 protein is UPF0053 inner membrane protein YgdQ (ygdQ).